A 100-amino-acid polypeptide reads, in one-letter code: Large ribosomal subunit protein uL23 (100 aa).

The protein belongs to the universal ribosomal protein uL23 family. As to quaternary structure, part of the 50S ribosomal subunit. Contacts protein L29, and trigger factor when it is bound to the ribosome.

In terms of biological role, one of the early assembly proteins it binds 23S rRNA. One of the proteins that surrounds the polypeptide exit tunnel on the outside of the ribosome. Forms the main docking site for trigger factor binding to the ribosome. The chain is Large ribosomal subunit protein uL23 from Prochlorococcus marinus (strain MIT 9301).